The following is a 301-amino-acid chain: Thyrotroph embryonic factor (301 aa).

2 disordered regions span residues 1-70 and 130-174; these read MSDA…ASTM and ESAS…DPSC. Serine 30 carries the post-translational modification Phosphoserine. Over residues 39 to 59 the composition is skewed to basic and acidic residues; sequence KLMENPPRETRLDKEKGKEKL. Residues 131-158 are compositionally biased toward low complexity; that stretch reads SASSSTASPPSSSTAIFQPSETVSSTES. The region spanning 231 to 294 is the bZIP domain; sequence DEKYWTRRKK…GKCKTIVSKY (64 aa). Residues 233–253 are basic motif; the sequence is KYWTRRKKNNVAAKRSRDARR. The tract at residues 254–261 is leucine-zipper; that stretch reads LKENQITI.

Belongs to the bZIP family. PAR subfamily. Binds DNA as a homodimer or a heterodimer. Can form a heterodimer with DBP. As to expression, isoform Alpha and isoform Beta are expressed at high levels in lung, bladder, kidney, gut and brain.

The protein localises to the nucleus. Functionally, transcription factor that binds to and transactivates the TSHB promoter. Binds to a minimal DNA-binding sequence 5'-[TC][AG][AG]TTA[TC][AG]-3'. Also activates the telokin promoter in smooth muscle-specific and calcium-dependent manner. This chain is Thyrotroph embryonic factor (Tef), found in Mus musculus (Mouse).